A 2083-amino-acid chain; its full sequence is Nonribosomal peptide synthetase sidD (2083 aa).

Residues 251-650 (TYRQIDQYSS…GEIESQLRAR (400 aa)) are adenylation 1. Positions 764–840 (RELSDLERRL…AMASVVRICD (77 aa)) constitute a Carrier 1 domain. Position 801 is an O-(pantetheine 4'-phosphoryl)serine (Ser801). The tract at residues 876 to 1146 (EDIYPCTPTQ…IATVPIRVRI (271 aa)) is condensation 1. Positions 1336–1421 (LSPIGCVGEL…TEIERHLAEH (86 aa)) are adenylation 2. Residues 1557–1633 (NHLSASESIL…DAARVMKVDE (77 aa)) enclose the Carrier 2 domain. Residue Ser1594 is modified to O-(pantetheine 4'-phosphoryl)serine. Residues 1674–1946 (DVLPVTDSQD…YQLTPVRVPF (273 aa)) are condensation 2.

It belongs to the NRP synthetase family.

It functions in the pathway siderophore biosynthesis. Its function is as follows. Nonribosomal peptide synthetase; part of the siderophore biosynthetic pathway. Aspergillus fumigatus produces four types of siderophores, low-molecular-mass iron chelators, including excreted fusarinine C (FsC) and triacetylfusarinine C (TAFC) for iron uptake; and intacellular ferricrocin (FC) for hyphal and hydroxyferricrocin (HFC) for conidial iron distribution and storage. TAFC consists of three N(2)-acetyl-N(5)-anhydromevalonyl-N(5)-hydroxyornithine residues cyclically linked by ester bonds; FC is a cyclic hexapeptide with the structure Gly-Ser-Gly-(N(5)-acetyl-N(5)-hydroxyornithine)x3. The biosynthesis of all four siderophores depends on the hydroxylation of ornithine, catalyzed by the monooxygenase sidA. Subsequently, the pathways for biosynthesis of extra- and intracellular siderophores split. For biosynthesis of extracellular siderophores, the transacylase sidF transfers anhydromevalonyl to N(5)-hydroxyornithine. The required anhydromevalonyl-CoA moiety is derived from mevalonate by CoA ligation and dehydration catalyzed by sidI and sidH respectively. The acetylation of N(5)-hydroxyornithine for FC biosynthesis involves the constitutively expressed sidL. FC is hydroxylated to HFC by an as yet uncharacterized enzyme during conidiation. Assembly of fusarinine C (FsC) and FC is catalyzed by two different nonribosomal peptide synthetases (NRPS), sidD and sidC respectively. Subsequently, sidG catalyzes N2-acetylation of FsC for forming TAFC. Both extra- and intracellular siderophores are crucial for growth during iron limitation and virulence. The protein is Nonribosomal peptide synthetase sidD of Aspergillus fumigatus (strain ATCC MYA-4609 / CBS 101355 / FGSC A1100 / Af293) (Neosartorya fumigata).